The sequence spans 223 residues: UPF0441 protein YgiB (223 aa).

Positions 201 to 223 (ESVAKQSTMQRSAAGTSTRSMGG) are disordered. Residues 204–223 (AKQSTMQRSAAGTSTRSMGG) are compositionally biased toward polar residues.

This sequence belongs to the UPF0441 family.

The protein is UPF0441 protein YgiB of Salmonella gallinarum (strain 287/91 / NCTC 13346).